A 64-amino-acid chain; its full sequence is MDETVKLNHTCVICDQEKNRGIHLYTKFICLDCERKVISTSTSDPDYAFYVKKLKSIHTPPLYS.

4 residues coordinate Zn(2+): cysteine 11, cysteine 14, cysteine 30, and cysteine 33.

As to quaternary structure, probably functions as a homodimer. Interacts with sigma-G factor, recognition occurs via the first 71 residues of sigma-G. It depends on Zn(2+) as a cofactor.

Its function is as follows. An anti-sigma-G factor, prevents premature activation of sigma-G factor in the forespore; overexpression leads to 1000-fold reduction in spore formation, spore formation stops after engulfment. Overexpression also inhibits sigma-G transcription activation activity. When both Gin and sigma-G are expressed in E.coli Gin inhibits sigma-G, strongly suggesting Gin inhibits by direct physical interaction. The polypeptide is Anti-sigma-G factor Gin (Bacillus subtilis (strain 168)).